The following is an 87-amino-acid chain: HssA/B-like protein 28 (87 aa).

This sequence belongs to the hssA/B family.

This Dictyostelium discoideum (Social amoeba) protein is HssA/B-like protein 28 (hssl28).